We begin with the raw amino-acid sequence, 429 residues long: Enolase (429 aa).

Glutamine 163 is a binding site for (2R)-2-phosphoglycerate. Glutamate 205 functions as the Proton donor in the catalytic mechanism. Mg(2+) is bound by residues aspartate 242, glutamate 285, and aspartate 312. (2R)-2-phosphoglycerate contacts are provided by lysine 337, arginine 366, serine 367, and lysine 388. The active-site Proton acceptor is lysine 337.

Belongs to the enolase family. Mg(2+) serves as cofactor.

It localises to the cytoplasm. Its subcellular location is the secreted. The protein localises to the cell surface. It carries out the reaction (2R)-2-phosphoglycerate = phosphoenolpyruvate + H2O. Its pathway is carbohydrate degradation; glycolysis; pyruvate from D-glyceraldehyde 3-phosphate: step 4/5. Its function is as follows. Catalyzes the reversible conversion of 2-phosphoglycerate (2-PG) into phosphoenolpyruvate (PEP). It is essential for the degradation of carbohydrates via glycolysis. The sequence is that of Enolase from Aromatoleum aromaticum (strain DSM 19018 / LMG 30748 / EbN1) (Azoarcus sp. (strain EbN1)).